Reading from the N-terminus, the 782-residue chain is DnaJ homolog subfamily C member 16 (782 aa).

The signal sequence occupies residues 1–25 (MEVRKLSISWQFLIVLVLILQILSA). Topologically, residues 26–535 (LDFDPYRVLG…DSIFHNNWRE (510 aa)) are cytoplasmic. The 65-residue stretch at 29–93 (DPYRVLGVSR…EKRSNYDQYG (65 aa)) folds into the J domain. Residues 119-247 (FYFDESFFHF…LRQFVESLLP (129 aa)) form the Thioredoxin domain. A helical; Anchor for type IV membrane protein transmembrane segment spans residues 536 to 556 (MMPLLSLIFSALFILFGTVIV). The Extracellular portion of the chain corresponds to 557-782 (QAFSDSNDER…FYIPSWPELD (226 aa)). Residues 562 to 593 (SNDERESSPPEKEEAQEKTGKTEPSFTKENSS) form a disordered region. Residues 563 to 582 (NDERESSPPEKEEAQEKTGK) are compositionally biased toward basic and acidic residues. The span at 583–593 (TEPSFTKENSS) shows a compositional bias: polar residues. N-linked (GlcNAc...) asparagine glycosylation occurs at Asn631.

Its subcellular location is the endoplasmic reticulum membrane. In terms of biological role, plays an important role in regulating the size of autophagosomes during the formation process. The polypeptide is DnaJ homolog subfamily C member 16 (DNAJC16) (Homo sapiens (Human)).